Consider the following 128-residue polypeptide: 3-aminoacrylate deaminase RutC (128 aa).

This sequence belongs to the RutC family.

It carries out the reaction (Z)-3-aminoacrylate + H2O + H(+) = 3-oxopropanoate + NH4(+). In terms of biological role, involved in pyrimidine catabolism. Catalyzes the deamination of 3-aminoacrylate to malonic semialdehyde, a reaction that can also occur spontaneously. RutC may facilitate the reaction and modulate the metabolic fitness, rather than catalyzing essential functions. This is 3-aminoacrylate deaminase RutC from Azorhizobium caulinodans (strain ATCC 43989 / DSM 5975 / JCM 20966 / LMG 6465 / NBRC 14845 / NCIMB 13405 / ORS 571).